The primary structure comprises 335 residues: Cytochrome c biogenesis protein CcsA (335 aa).

A run of 8 helical transmembrane segments spans residues 15 to 35 (FLLL…PNVT), 36 to 56 (WLPT…ATLL), 68 to 88 (LSNL…IHLV), 97 to 117 (LVGV…ALSL), 142 to 162 (VMML…AFLV), 243 to 263 (IIGL…VWAN), 278 to 298 (WALI…TKGW), and 304 to 324 (AILA…VNLL).

This sequence belongs to the CcmF/CycK/Ccl1/NrfE/CcsA family. As to quaternary structure, may interact with ccs1.

It localises to the cellular thylakoid membrane. In terms of biological role, required during biogenesis of c-type cytochromes (cytochrome c6 and cytochrome f) at the step of heme attachment. This chain is Cytochrome c biogenesis protein CcsA, found in Crocosphaera subtropica (strain ATCC 51142 / BH68) (Cyanothece sp. (strain ATCC 51142)).